Reading from the N-terminus, the 696-residue chain is Polyribonucleotide nucleotidyltransferase (696 aa).

Asp486 and Asp492 together coordinate Mg(2+). The KH domain maps to 553-612; it reads PRIIVRNIPKDRIGELIGPGGKNVRGISELTGAELYIEDDGRVTISGSNQESAEKAAKMV. The S1 motif domain maps to 622–690; the sequence is GKIYEGKVKR…KTGKIDLSRK (69 aa).

It belongs to the polyribonucleotide nucleotidyltransferase family. Requires Mg(2+) as cofactor.

It is found in the cytoplasm. It carries out the reaction RNA(n+1) + phosphate = RNA(n) + a ribonucleoside 5'-diphosphate. In terms of biological role, involved in mRNA degradation. Catalyzes the phosphorolysis of single-stranded polyribonucleotides processively in the 3'- to 5'-direction. This is Polyribonucleotide nucleotidyltransferase from Leptospira borgpetersenii serovar Hardjo-bovis (strain JB197).